A 230-amino-acid chain; its full sequence is 3,4-dihydroxy-2-butanone 4-phosphate synthase (230 aa).

Residues 42–43 (RE), aspartate 47, 155–159 (RRGHT), and glutamate 179 contribute to the D-ribulose 5-phosphate site. Glutamate 43 is a binding site for Mg(2+). A Mg(2+)-binding site is contributed by histidine 158.

This sequence belongs to the DHBP synthase family. As to quaternary structure, homodimer. The cofactor is Mg(2+). Mn(2+) is required as a cofactor.

The enzyme catalyses D-ribulose 5-phosphate = (2S)-2-hydroxy-3-oxobutyl phosphate + formate + H(+). Its pathway is cofactor biosynthesis; riboflavin biosynthesis; 2-hydroxy-3-oxobutyl phosphate from D-ribulose 5-phosphate: step 1/1. Catalyzes the conversion of D-ribulose 5-phosphate to formate and 3,4-dihydroxy-2-butanone 4-phosphate. The sequence is that of 3,4-dihydroxy-2-butanone 4-phosphate synthase from Bordetella bronchiseptica (strain ATCC BAA-588 / NCTC 13252 / RB50) (Alcaligenes bronchisepticus).